We begin with the raw amino-acid sequence, 811 residues long: Phenylalanine--tRNA ligase beta subunit (811 aa).

The tRNA-binding domain maps to 39-151 (RTWAAGVVVG…AGLQAGQPVG (113 aa)). A B5 domain is found at 409-495 (EPEHSITLRL…RLYGYDNFGE (87 aa)). Mg(2+)-binding residues include Asp-473, Asp-479, Glu-482, and Glu-483. Residues 717 to 810 (SSFPASDRDL…LVERFRVTLR (94 aa)) enclose the FDX-ACB domain.

This sequence belongs to the phenylalanyl-tRNA synthetase beta subunit family. Type 1 subfamily. In terms of assembly, tetramer of two alpha and two beta subunits. Requires Mg(2+) as cofactor.

It is found in the cytoplasm. The catalysed reaction is tRNA(Phe) + L-phenylalanine + ATP = L-phenylalanyl-tRNA(Phe) + AMP + diphosphate + H(+). This Synechococcus sp. (strain ATCC 27144 / PCC 6301 / SAUG 1402/1) (Anacystis nidulans) protein is Phenylalanine--tRNA ligase beta subunit.